The primary structure comprises 346 residues: Cell division protein ZipA (346 aa).

The Periplasmic segment spans residues Met1–Leu6. The chain crosses the membrane as a helical span at residues Val7–Ile27. The Cytoplasmic portion of the chain corresponds to Arg28–Ala346. The disordered stretch occupies residues Glu116–Val146.

This sequence belongs to the ZipA family. Interacts with FtsZ via their C-terminal domains.

It localises to the cell inner membrane. In terms of biological role, essential cell division protein that stabilizes the FtsZ protofilaments by cross-linking them and that serves as a cytoplasmic membrane anchor for the Z ring. Also required for the recruitment to the septal ring of downstream cell division proteins. The sequence is that of Cell division protein ZipA from Shewanella sp. (strain ANA-3).